Consider the following 334-residue polypeptide: Fructose-1,6-bisphosphatase class 1 (334 aa).

Mg(2+)-binding residues include E90, D113, L115, and D116. Substrate-binding positions include 116-119 (DGSS), N209, Y242, and K272. E278 is a Mg(2+) binding site.

Belongs to the FBPase class 1 family. Homotetramer. Requires Mg(2+) as cofactor.

The protein resides in the cytoplasm. The catalysed reaction is beta-D-fructose 1,6-bisphosphate + H2O = beta-D-fructose 6-phosphate + phosphate. Its pathway is carbohydrate biosynthesis; gluconeogenesis. The protein is Fructose-1,6-bisphosphatase class 1 of Actinobacillus pleuropneumoniae serotype 5b (strain L20).